Here is a 97-residue protein sequence, read N- to C-terminus: ESAT-6-like protein EsxG (97 aa).

Ser-2 is modified (N-acetylserine).

It belongs to the WXG100 family. CFP-10 subfamily. In terms of assembly, forms a tight 1:1 complex with EsxH.

It localises to the secreted. Its function is as follows. EsxG, in complex with EsxH, disrupts ESCRT function and impairs host phagosome maturation, thereby promoting intracellular bacterial growth. The complex acts by interacting, via EsxH, with the host hepatocyte growth factor-regulated tyrosine kinase substrate (HGS/HRS), a component of the ESCRT machinery. EsxG stabilizes EsxH in the host cytosol. This chain is ESAT-6-like protein EsxG, found in Mycobacterium tuberculosis (strain ATCC 25618 / H37Rv).